The following is a 288-amino-acid chain: Aquaporin PIP 1-3 (288 aa).

The disordered stretch occupies residues 1 to 30 (MEGKEEDVRLGANRYTERQPIGTAAQGAEE). The next 2 helical transmembrane spans lie at 57–77 (IAEFVATFLFLYISILTVMGV) and 92–114 (IAWSFGGMIFALVYCTAGISGGH). The short motif at 116–118 (NPA) is the NPA 1 element. 3 helical membrane passes run 135 to 155 (VFYMAMQCLGAICGAGVVKGF), 177 to 197 (GDGLGAEIVGTFVLVYTVFSA), and 211 to 231 (ILAPLPIGFAVFLVHLATIPI). Residues 237–239 (NPA) carry the NPA 2 motif. A helical transmembrane segment spans residues 259–279 (IFWVGPFIGAALAAIYHVVVI).

The protein belongs to the MIP/aquaporin (TC 1.A.8) family. PIP (TC 1.A.8.11) subfamily. In terms of tissue distribution, expressed in roots and leaves.

The protein localises to the cell membrane. Water channel required to facilitate the transport of water across cell membrane. Increases the capacity for root water uptake under water deficit. May play a role in drought avoidance in upland rice. The chain is Aquaporin PIP 1-3 (PIP1-3) from Oryza sativa subsp. japonica (Rice).